Reading from the N-terminus, the 430-residue chain is Enolase (430 aa).

Position 165 (Gln-165) interacts with (2R)-2-phosphoglycerate. Catalysis depends on Glu-207, which acts as the Proton donor. Residues Asp-244, Glu-287, and Asp-314 each coordinate Mg(2+). (2R)-2-phosphoglycerate contacts are provided by Lys-339, Arg-368, Ser-369, and Lys-390. Residue Lys-339 is the Proton acceptor of the active site.

The protein belongs to the enolase family. In terms of assembly, component of the RNA degradosome, a multiprotein complex involved in RNA processing and mRNA degradation. The cofactor is Mg(2+).

It is found in the cytoplasm. It localises to the secreted. The protein localises to the cell surface. The enzyme catalyses (2R)-2-phosphoglycerate = phosphoenolpyruvate + H2O. It participates in carbohydrate degradation; glycolysis; pyruvate from D-glyceraldehyde 3-phosphate: step 4/5. Catalyzes the reversible conversion of 2-phosphoglycerate (2-PG) into phosphoenolpyruvate (PEP). It is essential for the degradation of carbohydrates via glycolysis. In Xanthomonas oryzae pv. oryzae (strain MAFF 311018), this protein is Enolase.